A 240-amino-acid polypeptide reads, in one-letter code: LexA repressor (240 aa).

Residues 26-46 (FDEMKDALDLASKSGIHRLIT) constitute a DNA-binding region (H-T-H motif). The disordered stretch occupies residues 78-113 (QPRRGFSPSVIEGSLGKPQPVQPPAPAKPANDENNS). Residues S160 and K198 each act as for autocatalytic cleavage activity in the active site.

It belongs to the peptidase S24 family. In terms of assembly, homodimer.

The enzyme catalyses Hydrolysis of Ala-|-Gly bond in repressor LexA.. Its function is as follows. Represses a number of genes involved in the response to DNA damage (SOS response), including recA and lexA. In the presence of single-stranded DNA, RecA interacts with LexA causing an autocatalytic cleavage which disrupts the DNA-binding part of LexA, leading to derepression of the SOS regulon and eventually DNA repair. The sequence is that of LexA repressor from Rhizobium rhizogenes (strain K84 / ATCC BAA-868) (Agrobacterium radiobacter).